The sequence spans 266 residues: Probable metal transport system membrane protein TP_0036 (266 aa).

8 helical membrane passes run 10–30 (AFVA…HLVL), 34–54 (ALMG…AVSC), 56–76 (IHPG…IEFL), 88–108 (LSIV…SGLI), 120–140 (ILVV…FCVG), 172–192 (VASV…GILV), 211–231 (FLLT…LGLV), and 238–258 (VAPG…VIAL).

This sequence belongs to the ABC-3 integral membrane protein family.

Its subcellular location is the cell inner membrane. Part of an ATP-driven transport system TP_0034/TP_0035/TP_0036 for a metal. In Treponema pallidum (strain Nichols), this protein is Probable metal transport system membrane protein TP_0036.